The following is a 153-amino-acid chain: Ribosome maturation factor RimP (153 aa).

Belongs to the RimP family.

The protein resides in the cytoplasm. In terms of biological role, required for maturation of 30S ribosomal subunits. This is Ribosome maturation factor RimP from Actinobacillus pleuropneumoniae serotype 5b (strain L20).